The following is a 228-amino-acid chain: Ribose-5-phosphate isomerase A (228 aa).

Substrate-binding positions include 32 to 35 (TGST), 85 to 88 (DGAD), and 98 to 101 (KGGG). The Proton acceptor role is filled by glutamate 107. Lysine 125 contacts substrate.

It belongs to the ribose 5-phosphate isomerase family. As to quaternary structure, homodimer.

The enzyme catalyses aldehydo-D-ribose 5-phosphate = D-ribulose 5-phosphate. It participates in carbohydrate degradation; pentose phosphate pathway; D-ribose 5-phosphate from D-ribulose 5-phosphate (non-oxidative stage): step 1/1. Functionally, catalyzes the reversible conversion of ribose-5-phosphate to ribulose 5-phosphate. This Cupriavidus taiwanensis (strain DSM 17343 / BCRC 17206 / CCUG 44338 / CIP 107171 / LMG 19424 / R1) (Ralstonia taiwanensis (strain LMG 19424)) protein is Ribose-5-phosphate isomerase A.